The sequence spans 396 residues: Tail sheath protein (396 aa).

This sequence belongs to the myoviridae tail sheath protein family. As to quaternary structure, homomultimer.

Its subcellular location is the virion. The protein localises to the host cytoplasm. Its function is as follows. Polymerizes as an extended helical structure around the baseplate-tail tube complex. During ejection, the sheath shifts to a contracted form, thereby making the inner tail tube protrude through the host cell envelope. The chain is Tail sheath protein (FI) from Enterobacteriaceae (Bacteriophage P2).